The sequence spans 436 residues: tRNA pseudouridine synthase Pus10 (436 aa).

Catalysis depends on Asp-254, which acts as the Nucleophile. Tyr-322 and Tyr-394 together coordinate substrate.

This sequence belongs to the pseudouridine synthase Pus10 family.

The enzyme catalyses uridine(54) in tRNA = pseudouridine(54) in tRNA. It catalyses the reaction uridine(55) in tRNA = pseudouridine(55) in tRNA. In terms of biological role, responsible for synthesis of pseudouridine from uracil-54 and uracil-55 in the psi GC loop of transfer RNAs. In Methanopyrus kandleri (strain AV19 / DSM 6324 / JCM 9639 / NBRC 100938), this protein is tRNA pseudouridine synthase Pus10.